We begin with the raw amino-acid sequence, 170 residues long: Transcription factor E (170 aa).

The HTH TFE/IIEalpha-type domain maps to 1 to 93; sequence MKDVYLYIVE…TWYVDDEIIK (93 aa).

This sequence belongs to the TFE family. As to quaternary structure, monomer. Interaction with RNA polymerase subunits RpoF and RpoE is necessary for Tfe stimulatory transcription activity. Able to interact with Tbp and RNA polymerase in the absence of DNA promoter. Interacts both with the preinitiation and elongation complexes.

Its function is as follows. Transcription factor that plays a role in the activation of archaeal genes transcribed by RNA polymerase. Facilitates transcription initiation by enhancing TATA-box recognition by TATA-box-binding protein (Tbp), and transcription factor B (Tfb) and RNA polymerase recruitment. Not absolutely required for transcription in vitro, but particularly important in cases where Tbp or Tfb function is not optimal. It dynamically alters the nucleic acid-binding properties of RNA polymerases by stabilizing the initiation complex and destabilizing elongation complexes. Seems to translocate with the RNA polymerase following initiation and acts by binding to the non template strand of the transcription bubble in elongation complexes. This chain is Transcription factor E, found in Pyrobaculum aerophilum (strain ATCC 51768 / DSM 7523 / JCM 9630 / CIP 104966 / NBRC 100827 / IM2).